A 142-amino-acid chain; its full sequence is Hemoglobin subunit alpha (142 aa).

Residues 2 to 142 (VLSPADKTNI…VSTVLTSKYR (141 aa)) form the Globin domain. Residue Ser-4 is modified to Phosphoserine. Residue Lys-8 is modified to N6-succinyllysine. Thr-9 bears the Phosphothreonine mark. An N6-succinyllysine modification is found at Lys-12. Lys-17 carries the N6-acetyllysine; alternate modification. N6-succinyllysine; alternate is present on Lys-17. Tyr-25 is subject to Phosphotyrosine. At Ser-36 the chain carries Phosphoserine. Lys-41 carries the N6-succinyllysine modification. Residue Ser-50 is modified to Phosphoserine. His-59 lines the O2 pocket. His-88 serves as a coordination point for heme b. Residue Ser-103 is modified to Phosphoserine. Thr-109 is subject to Phosphothreonine. Ser-125 is modified (phosphoserine). Thr-135 and Thr-138 each carry phosphothreonine. A Phosphoserine modification is found at Ser-139.

This sequence belongs to the globin family. In terms of assembly, heterotetramer of two alpha chains and two beta chains. In terms of tissue distribution, red blood cells.

Involved in oxygen transport from the lung to the various peripheral tissues. Its function is as follows. Hemopressin acts as an antagonist peptide of the cannabinoid receptor CNR1. Hemopressin-binding efficiently blocks cannabinoid receptor CNR1 and subsequent signaling. This is Hemoglobin subunit alpha (HBA) from Canis latrans (Coyote).